Reading from the N-terminus, the 473-residue chain is Nitrogenase vanadium-iron protein alpha chain (473 aa).

Positions 49, 74, and 137 each coordinate [8Fe-7S] cluster. Residues C256 and H422 each coordinate [7Fe-V-9S-C-homocitryl] cluster.

This sequence belongs to the NifD/NifK/NifE/NifN family. In terms of assembly, hexamer of two alpha, two beta, and two delta chains. [8Fe-7S] cluster serves as cofactor. The cofactor is [7Fe-V-9S-C-homocitryl] cluster.

It carries out the reaction N2 + 8 reduced [2Fe-2S]-[ferredoxin] + 16 ATP + 16 H2O = H2 + 8 oxidized [2Fe-2S]-[ferredoxin] + 2 NH4(+) + 16 ADP + 16 phosphate + 6 H(+). Functionally, this vanadium-iron protein is part of the nitrogenase complex that catalyzes the key enzymatic reactions in nitrogen fixation. This Azotobacter chroococcum mcd 1 protein is Nitrogenase vanadium-iron protein alpha chain (vnfD).